Here is a 345-residue protein sequence, read N- to C-terminus: Phenylalanine--tRNA ligase alpha subunit (345 aa).

Residue Glu-253 coordinates Mg(2+).

This sequence belongs to the class-II aminoacyl-tRNA synthetase family. Phe-tRNA synthetase alpha subunit type 1 subfamily. As to quaternary structure, tetramer of two alpha and two beta subunits. It depends on Mg(2+) as a cofactor.

The protein resides in the cytoplasm. It catalyses the reaction tRNA(Phe) + L-phenylalanine + ATP = L-phenylalanyl-tRNA(Phe) + AMP + diphosphate + H(+). The polypeptide is Phenylalanine--tRNA ligase alpha subunit (Nitratidesulfovibrio vulgaris (strain DSM 19637 / Miyazaki F) (Desulfovibrio vulgaris)).